The primary structure comprises 327 residues: L-serine dehydratase/L-threonine deaminase (327 aa).

Position 41 is an N6-(pyridoxal phosphate)lysine (lysine 41).

The protein belongs to the serine/threonine dehydratase family. In terms of assembly, homodimer. It depends on pyridoxal 5'-phosphate as a cofactor.

The protein resides in the cytoplasm. The catalysed reaction is L-serine = pyruvate + NH4(+). It catalyses the reaction L-threonine = 2-oxobutanoate + NH4(+). Its pathway is carbohydrate biosynthesis; gluconeogenesis. Catalyzes the pyridoxal-phosphate-dependent dehydrative deamination of L-threonine and L-serine to ammonia and alpha-ketobutyrate and pyruvate, respectively. This chain is L-serine dehydratase/L-threonine deaminase (SDS), found in Bos taurus (Bovine).